The sequence spans 75 residues: Penaeidin-3m (75 aa).

Positions 1-19 (MRLVVCLVFLASFALVCQG) are cleaved as a signal peptide. Position 20 is a pyrrolidone carboxylic acid (glutamine 20). Cystine bridges form between cysteine 44–cysteine 59, cysteine 48–cysteine 66, and cysteine 60–cysteine 67. A Serine amide modification is found at serine 74.

Belongs to the penaeidin family.

The protein localises to the cytoplasmic granule. Antibacterial and antifungal activity. Presents chitin-binding activity. This chain is Penaeidin-3m, found in Penaeus setiferus (Atlantic white shrimp).